Reading from the N-terminus, the 766-residue chain is Probable beta-glucosidase K (766 aa).

An N-linked (GlcNAc...) asparagine glycan is attached at N19. D196 is a catalytic residue. N-linked (GlcNAc...) asparagine glycosylation is found at N288, N453, and N748. Residues 369-528 form the PA14 domain; it reads EGQPGLGMRF…DPERAIARAV (160 aa). The interval 726 to 766 is disordered; it reads LGRRGRSGSSPAVYRGRSNNVVNRTSHQGAQRISKGGFAAR. Positions 742–756 are enriched in polar residues; it reads RSNNVVNRTSHQGAQ.

This sequence belongs to the glycosyl hydrolase 3 family.

It is found in the secreted. It catalyses the reaction Hydrolysis of terminal, non-reducing beta-D-glucosyl residues with release of beta-D-glucose.. The protein operates within glycan metabolism; cellulose degradation. Functionally, beta-glucosidases are one of a number of cellulolytic enzymes involved in the degradation of cellulosic biomass. Catalyzes the last step releasing glucose from the inhibitory cellobiose. The chain is Probable beta-glucosidase K (bglK) from Aspergillus fumigatus (strain CBS 144.89 / FGSC A1163 / CEA10) (Neosartorya fumigata).